Here is a 172-residue protein sequence, read N- to C-terminus: Small ribosomal subunit protein uS5 (172 aa).

In terms of domain architecture, S5 DRBM spans 15–78 (LNDKLIFINR…ANAKRNLSRI (64 aa)).

Belongs to the universal ribosomal protein uS5 family. Part of the 30S ribosomal subunit. Contacts proteins S4 and S8.

With S4 and S12 plays an important role in translational accuracy. In terms of biological role, located at the back of the 30S subunit body where it stabilizes the conformation of the head with respect to the body. In Dehalococcoides mccartyi (strain ATCC BAA-2266 / KCTC 15142 / 195) (Dehalococcoides ethenogenes (strain 195)), this protein is Small ribosomal subunit protein uS5.